A 347-amino-acid chain; its full sequence is Monopolin complex subunit LRS4 (347 aa).

Residues 46–118 (KKVVDETLFL…QISVDKHNKE (73 aa)) adopt a coiled-coil conformation. Over residues 112–130 (VDKHNKERTPSTGRDEQQR) the composition is skewed to basic and acidic residues. 2 disordered regions span residues 112–183 (VDKH…SLLS) and 208–230 (RNDT…LQKS). 2 stretches are compositionally biased toward polar residues: residues 131–140 (NSKAAHTSKP) and 155–172 (NNQT…PTSQ). Phosphoserine occurs at positions 168 and 230.

In terms of assembly, component of the monopolin complex composed of at least CSM1, LRS4 and MAM1. The complex associates with the kinetochore. Post-translationally, phosphorylated by CDC5. This phosphorylation is required for the location to the kinetochores during late pachytene.

It is found in the nucleus. The protein resides in the nucleolus. It localises to the chromosome. Its subcellular location is the centromere. In terms of biological role, component of the monopolin complex which promotes monoorientation during meiosis I, required for chromosome segregation during meiosis. Involved in rDNA silencing. This is Monopolin complex subunit LRS4 (LRS4) from Saccharomyces cerevisiae (strain ATCC 204508 / S288c) (Baker's yeast).